Consider the following 545-residue polypeptide: Baeyer-Villiger monooxygenase (545 aa).

FAD contacts are provided by Phe-24, Asp-45, Trp-54, Asp-65, Tyr-71, and Val-118.

The protein belongs to the FAD-binding monooxygenase family. Requires FAD as cofactor.

Catalyzes a Baeyer-Villiger oxidation reaction, i.e. the insertion of an oxygen atom into a carbon-carbon bond adjacent to a carbonyl, which converts ketones to esters or lactones using NADPH as an electron donor. Besides cycloalkanones, can use cyclic alpha,beta-unsaturated ketones as substrates, leading to conjugated ene-lactones. Can also act on methylated cycloalkanones and methylated cycloalkenones with high enantioselectivity in some cases. This Pseudooceanicola batsensis (strain ATCC BAA-863 / DSM 15984 / KCTC 12145 / HTCC2597) (Oceanicola batsensis) protein is Baeyer-Villiger monooxygenase.